Here is a 74-residue protein sequence, read N- to C-terminus: Small ribosomal subunit protein bS18 (74 aa).

Belongs to the bacterial ribosomal protein bS18 family. In terms of assembly, part of the 30S ribosomal subunit. Forms a tight heterodimer with protein bS6.

Its function is as follows. Binds as a heterodimer with protein bS6 to the central domain of the 16S rRNA, where it helps stabilize the platform of the 30S subunit. The chain is Small ribosomal subunit protein bS18 from Natranaerobius thermophilus (strain ATCC BAA-1301 / DSM 18059 / JW/NM-WN-LF).